The chain runs to 819 residues: Eukaryotic translation initiation factor 3 subunit C (819 aa).

The tract at residues 1–106 (MSRFFLKTYE…DSSDEEDGKK (106 aa)) is disordered. Composition is skewed to acidic residues over residues 17–41 (GEEE…ELSD) and 47–59 (DSDE…EDND). Residues 620 to 795 (FHQHINLDLI…EYIIFERGEE (176 aa)) form the PCI domain.

Belongs to the eIF-3 subunit C family. Component of the eukaryotic translation initiation factor 3 (eIF-3) complex.

The protein resides in the cytoplasm. Functionally, component of the eukaryotic translation initiation factor 3 (eIF-3) complex, which is involved in protein synthesis of a specialized repertoire of mRNAs and, together with other initiation factors, stimulates binding of mRNA and methionyl-tRNAi to the 40S ribosome. The eIF-3 complex specifically targets and initiates translation of a subset of mRNAs involved in cell proliferation. In Kluyveromyces lactis (strain ATCC 8585 / CBS 2359 / DSM 70799 / NBRC 1267 / NRRL Y-1140 / WM37) (Yeast), this protein is Eukaryotic translation initiation factor 3 subunit C.